Consider the following 151-residue polypeptide: DNA-directed RNA polymerase RPB6 homolog (151 aa).

Over residues 20–44 (ETEEENFVDSEEESEDKSEDKDEIV) the composition is skewed to acidic residues. Residues 20–46 (ETEEENFVDSEEESEDKSEDKDEIVES) form a disordered region.

The protein belongs to the archaeal RpoK/eukaryotic RPB6 RNA polymerase subunit family. In terms of assembly, part of the viral DNA-directed RNA polymerase that consists of 8 polII-like subunits (RPB1, RPB2, RPB3, RPB5, RPB6, RPB7, RPB9, RPB10), a capping enzyme and a termination factor.

It localises to the host cytoplasm. Its subcellular location is the virion. Component of the DNA-directed RNA polymerase (RNAP) that catalyzes the transcription in the cytoplasm of viral DNA into RNA using the four ribonucleoside triphosphates as substrates. This chain is DNA-directed RNA polymerase RPB6 homolog, found in African swine fever virus (isolate Tick/Malawi/Lil 20-1/1983) (ASFV).